The primary structure comprises 151 residues: Deoxyuridine 5'-triphosphate nucleotidohydrolase (151 aa).

Substrate contacts are provided by residues 71 to 73 (RSG), Asn84, and 88 to 90 (TID).

The protein belongs to the dUTPase family. Mg(2+) serves as cofactor.

The enzyme catalyses dUTP + H2O = dUMP + diphosphate + H(+). It functions in the pathway pyrimidine metabolism; dUMP biosynthesis; dUMP from dCTP (dUTP route): step 2/2. In terms of biological role, this enzyme is involved in nucleotide metabolism: it produces dUMP, the immediate precursor of thymidine nucleotides and it decreases the intracellular concentration of dUTP so that uracil cannot be incorporated into DNA. This chain is Deoxyuridine 5'-triphosphate nucleotidohydrolase, found in Gluconobacter oxydans (strain 621H) (Gluconobacter suboxydans).